The primary structure comprises 180 residues: ADP-ribosylation factor 5 (180 aa).

Gly2 is lipidated: N-myristoyl glycine. GTP-binding positions include 24–31, 67–71, and 126–129; these read GLDAAGKT, DVGGQ, and NKQD.

Belongs to the small GTPase superfamily. Arf family.

It is found in the golgi apparatus. In terms of biological role, GTP-binding protein involved in protein trafficking; may modulate vesicle budding and uncoating within the Golgi apparatus. The sequence is that of ADP-ribosylation factor 5 (ARF5) from Gallus gallus (Chicken).